The sequence spans 499 residues: Gamma-aminobutyric acid receptor subunit beta (499 aa).

An N-terminal signal peptide occupies residues methionine 1–cysteine 23. At glutamine 24–tyrosine 251 the chain is on the extracellular side. N-linked (GlcNAc...) asparagine glycans are attached at residues asparagine 32, asparagine 98, asparagine 106, and asparagine 152. A disulfide bridge links cysteine 167 with cysteine 181. 3 helical membrane passes run phenylalanine 252–isoleucine 273, threonine 278–valine 299, and alanine 311–valine 333. Residues asparagine 334–lysine 475 lie on the Cytoplasmic side of the membrane. Residues tyrosine 476–threonine 499 traverse the membrane as a helical segment.

It belongs to the ligand-gated ion channel (TC 1.A.9) family. Gamma-aminobutyric acid receptor (TC 1.A.9.5) subfamily. Generally pentameric. There are five types of GABA(A) receptor chains: alpha, beta, gamma, delta, and rho.

Its subcellular location is the postsynaptic cell membrane. It localises to the cell membrane. In terms of biological role, GABA, an inhibitory neurotransmitter, mediates neuronal inhibition by binding to the GABA/benzodiazepine receptor and opening an integral chloride channel. The chain is Gamma-aminobutyric acid receptor subunit beta from Lymnaea stagnalis (Great pond snail).